The following is a 154-amino-acid chain: Ribonuclease 8 (154 aa).

Positions 1 to 27 (MAPARAGCCPLLLLLLGLRVAQIPVSA) are cleaved as a signal peptide. His-42 acts as the Proton acceptor in catalysis. 3 disulfide bridges follow: Cys-64/Cys-118, Cys-82/Cys-133, and Cys-89/Cys-96. Residues 65 to 69 (KDLNT) and Lys-90 each bind substrate. Catalysis depends on His-149, which acts as the Proton donor.

Belongs to the pancreatic ribonuclease family.

Its subcellular location is the secreted. Functionally, has a low ribonuclease activity. This is Ribonuclease 8 (RNASE8) from Miopithecus talapoin (Angolan talapoin).